We begin with the raw amino-acid sequence, 599 residues long: rRNA (cytosine-C(5))-methyltransferase NOP2C (599 aa).

In terms of domain architecture, PUA spans 158 to 265 (PKEVLVSRKC…IAVDLNHRVF (108 aa)). Residues 304–310 (CAAPGGK), Asp-328, and Asp-355 contribute to the S-adenosyl-L-methionine site. Positions 372 to 454 (LINGDNSSSM…GGRAGKSQGF (83 aa)) are disordered. A compositionally biased stretch (low complexity) spans 378 to 388 (SSSMTSHSELS). Over residues 399 to 412 (RRSEADKSCEKNDS) the composition is skewed to basic and acidic residues. Over residues 413 to 424 (TEQPNGGDNVSQ) the composition is skewed to polar residues. Residues 428 to 438 (RKNKGRLKNGR) are compositionally biased toward basic residues. Residue Asp-465 participates in S-adenosyl-L-methionine binding. Cys-516 serves as the catalytic Nucleophile.

The protein belongs to the class I-like SAM-binding methyltransferase superfamily. RsmB/NOP family.

It localises to the nucleus. The protein localises to the nucleolus. The catalysed reaction is a cytidine in rRNA + S-adenosyl-L-methionine = a 5-methylcytidine in rRNA + S-adenosyl-L-homocysteine + H(+). In terms of biological role, involved in ribosomal large subunit assembly. S-adenosyl-L-methionine-dependent methyltransferase that may methylates the C(5) position of cytosine in rRNA. May play a role in the regulation of the cell cycle and the increased nucleolar activity that is associated with the cell proliferation. Seems involved in the regulation of cell proliferation. The chain is rRNA (cytosine-C(5))-methyltransferase NOP2C from Arabidopsis thaliana (Mouse-ear cress).